A 481-amino-acid chain; its full sequence is Adenosylhomocysteinase (481 aa).

T65, D140, and E200 together coordinate substrate. Position 201-203 (201-203 (TTT)) interacts with NAD(+). Substrate is bound by residues K230 and D234. NAD(+) is bound by residues N235, 264–269 (GYGDVG), E287, N322, 343–345 (IGH), and N393.

It belongs to the adenosylhomocysteinase family. NAD(+) is required as a cofactor.

The protein localises to the cytoplasm. The enzyme catalyses S-adenosyl-L-homocysteine + H2O = L-homocysteine + adenosine. The protein operates within amino-acid biosynthesis; L-homocysteine biosynthesis; L-homocysteine from S-adenosyl-L-homocysteine: step 1/1. Functionally, may play a key role in the regulation of the intracellular concentration of adenosylhomocysteine. The polypeptide is Adenosylhomocysteinase (Polynucleobacter necessarius subsp. necessarius (strain STIR1)).